Consider the following 686-residue polypeptide: Protein arginine N-methyltransferase 7 (686 aa).

2 consecutive SAM-dependent MTase PRMT-type domains span residues 5–352 (SDDY…FSWW) and 357–686 (DLSL…FKFD).

This sequence belongs to the class I-like SAM-binding methyltransferase superfamily. Protein arginine N-methyltransferase family. PRMT7 subfamily.

In terms of biological role, essential arginine methyltransferase that can both catalyze the formation of omega-N monomethylarginine (MMA) and symmetrical dimethylarginine (sDMA). Specifically mediates the symmetrical dimethylation of arginine residues in the small nuclear ribonucleoproteins SmD1 and SmD3. The sequence is that of Protein arginine N-methyltransferase 7 (Art7) from Aedes aegypti (Yellowfever mosquito).